A 596-amino-acid polypeptide reads, in one-letter code: Succinate dehydrogenase flavoprotein subunit (596 aa).

FAD is bound by residues 18–23, 41–56, and aspartate 225; these read GAGGAG and TKLFPTRSHTVAAQGG. Histidine 49 carries the tele-8alpha-FAD histidine modification. Substrate-binding residues include histidine 246 and threonine 258. Arginine 290 acts as the Proton acceptor in catalysis. Residue histidine 357 participates in substrate binding. Glutamate 391 contacts FAD. Arginine 402 is a binding site for substrate. Residue 407 to 408 coordinates FAD; the sequence is SL.

This sequence belongs to the FAD-dependent oxidoreductase 2 family. FRD/SDH subfamily. In terms of assembly, part of an enzyme complex containing four subunits: a flavoprotein, an iron-sulfur, cytochrome b-556, and a hydrophobic anchor protein. The cofactor is FAD.

Its subcellular location is the cell inner membrane. It catalyses the reaction a quinone + succinate = fumarate + a quinol. Its pathway is carbohydrate metabolism; tricarboxylic acid cycle; fumarate from succinate (bacterial route): step 1/1. The sequence is that of Succinate dehydrogenase flavoprotein subunit (sdhA) from Rickettsia felis (strain ATCC VR-1525 / URRWXCal2) (Rickettsia azadi).